The primary structure comprises 332 residues: L-lactate dehydrogenase A chain (332 aa).

Ala-2 is subject to N-acetylalanine. Lys-5 is subject to N6-acetyllysine; alternate. Lys-5 carries the post-translational modification N6-succinyllysine; alternate. Phosphotyrosine is present on Tyr-10. N6-acetyllysine is present on Lys-14. Thr-18 carries the phosphothreonine modification. 29–57 contributes to the NAD(+) binding site; it reads GAVGMACAISILMKDLADELALVDVIEDK. Lys-57 carries the N6-acetyllysine; alternate modification. Residue Lys-57 forms a Glycyl lysine isopeptide (Lys-Gly) (interchain with G-Cter in SUMO2); alternate linkage. An N6-acetyllysine modification is found at Lys-81. Arg-99 lines the NAD(+) pocket. Position 106 (Arg-106) interacts with substrate. Lys-118 carries the N6-acetyllysine; alternate modification. An N6-succinyllysine; alternate modification is found at Lys-118. Position 126 is an N6-acetyllysine (Lys-126). An NAD(+)-binding site is contributed by Asn-138. Substrate contacts are provided by Asn-138 and Arg-169. The Proton acceptor role is filled by His-193. 2 positions are modified to N6-acetyllysine: Lys-224 and Lys-232. Tyr-239 bears the Phosphotyrosine mark. Position 243 is an N6-acetyllysine (Lys-243). Thr-248 contributes to the substrate binding site. Thr-309 bears the Phosphothreonine mark. Position 310 is a phosphoserine (Ser-310). Lys-318 carries the post-translational modification N6-acetyllysine; alternate. N6-succinyllysine; alternate is present on Lys-318. Thr-322 bears the Phosphothreonine mark.

It belongs to the LDH/MDH superfamily. LDH family. Homotetramer. Interacts with PTEN upstream reading frame protein MP31. Interacts with folliculin FLCN; the interaction is direct and inhibits enzymatic activity. ISGylated. As to expression, predominantly expressed in anaerobic tissues such as skeletal muscle and liver.

It is found in the cytoplasm. It carries out the reaction (S)-lactate + NAD(+) = pyruvate + NADH + H(+). It functions in the pathway fermentation; pyruvate fermentation to lactate; (S)-lactate from pyruvate: step 1/1. With respect to regulation, fermentation of pyruvate to lactate is inhibited when bound to folliculin FLCN, perhaps partly by FLCN preventing binding of cofactor NADH. Interconverts simultaneously and stereospecifically pyruvate and lactate with concomitant interconversion of NADH and NAD(+). This chain is L-lactate dehydrogenase A chain, found in Homo sapiens (Human).